Reading from the N-terminus, the 301-residue chain is Probable porphobilinogen deaminase (301 aa).

At Cys241 the chain carries S-(dipyrrolylmethanemethyl)cysteine.

Belongs to the HMBS family. Dipyrromethane is required as a cofactor.

The enzyme catalyses 4 porphobilinogen + H2O = hydroxymethylbilane + 4 NH4(+). It functions in the pathway porphyrin-containing compound metabolism; protoporphyrin-IX biosynthesis; coproporphyrinogen-III from 5-aminolevulinate: step 2/4. Its function is as follows. Tetrapolymerization of the monopyrrole PBG into the hydroxymethylbilane pre-uroporphyrinogen in several discrete steps. This is Probable porphobilinogen deaminase from Pyrobaculum islandicum (strain DSM 4184 / JCM 9189 / GEO3).